The following is a 417-amino-acid chain: Serine hydroxymethyltransferase (417 aa).

(6S)-5,6,7,8-tetrahydrofolate is bound by residues Leu-121 and 125–127 (GHL). Lys-229 bears the N6-(pyridoxal phosphate)lysine mark. 355–357 (SPF) is a (6S)-5,6,7,8-tetrahydrofolate binding site.

It belongs to the SHMT family. Homodimer. Pyridoxal 5'-phosphate serves as cofactor.

The protein localises to the cytoplasm. The catalysed reaction is (6R)-5,10-methylene-5,6,7,8-tetrahydrofolate + glycine + H2O = (6S)-5,6,7,8-tetrahydrofolate + L-serine. It functions in the pathway one-carbon metabolism; tetrahydrofolate interconversion. The protein operates within amino-acid biosynthesis; glycine biosynthesis; glycine from L-serine: step 1/1. Functionally, catalyzes the reversible interconversion of serine and glycine with tetrahydrofolate (THF) serving as the one-carbon carrier. This reaction serves as the major source of one-carbon groups required for the biosynthesis of purines, thymidylate, methionine, and other important biomolecules. Also exhibits THF-independent aldolase activity toward beta-hydroxyamino acids, producing glycine and aldehydes, via a retro-aldol mechanism. The polypeptide is Serine hydroxymethyltransferase (Xylella fastidiosa (strain M12)).